The chain runs to 380 residues: Cytochrome b (380 aa).

4 helical membrane passes run 34–54, 78–99, 114–134, and 179–199; these read FGSL…LLAT, WLIR…YLHI, WNTG…GYVL, and FFAL…IHLT. The heme b site is built by His84 and His98. The heme b site is built by His183 and His197. His202 contributes to the a ubiquinone binding site. The next 4 membrane-spanning stretches (helical) occupy residues 227 to 247, 289 to 309, 321 to 341, and 348 to 368; these read LKDI…ALFS, LGGV…PFLH, ISQL…WIGS, and FIII…ALFP.

It belongs to the cytochrome b family. As to quaternary structure, the cytochrome bc1 complex contains 11 subunits: 3 respiratory subunits (MT-CYB, CYC1 and UQCRFS1), 2 core proteins (UQCRC1 and UQCRC2) and 6 low-molecular weight proteins (UQCRH/QCR6, UQCRB/QCR7, UQCRQ/QCR8, UQCR10/QCR9, UQCR11/QCR10 and a cleavage product of UQCRFS1). This cytochrome bc1 complex then forms a dimer. Heme b serves as cofactor.

It localises to the mitochondrion inner membrane. In terms of biological role, component of the ubiquinol-cytochrome c reductase complex (complex III or cytochrome b-c1 complex) that is part of the mitochondrial respiratory chain. The b-c1 complex mediates electron transfer from ubiquinol to cytochrome c. Contributes to the generation of a proton gradient across the mitochondrial membrane that is then used for ATP synthesis. The polypeptide is Cytochrome b (MT-CYB) (Buteo buteo (Eurasian buzzard)).